A 443-amino-acid polypeptide reads, in one-letter code: Glutamyl-tRNA reductase (443 aa).

Substrate contacts are provided by residues T49–R52, S109, E114–Q116, and Q120. C50 (nucleophile) is an active-site residue. G189–S194 contacts NADP(+).

It belongs to the glutamyl-tRNA reductase family. As to quaternary structure, homodimer.

The enzyme catalyses (S)-4-amino-5-oxopentanoate + tRNA(Glu) + NADP(+) = L-glutamyl-tRNA(Glu) + NADPH + H(+). The protein operates within porphyrin-containing compound metabolism; protoporphyrin-IX biosynthesis; 5-aminolevulinate from L-glutamyl-tRNA(Glu): step 1/2. Its function is as follows. Catalyzes the NADPH-dependent reduction of glutamyl-tRNA(Glu) to glutamate 1-semialdehyde (GSA). The chain is Glutamyl-tRNA reductase from Desulfitobacterium hafniense (strain DSM 10664 / DCB-2).